Here is a 188-residue protein sequence, read N- to C-terminus: Elongation factor P (188 aa).

The protein belongs to the elongation factor P family.

The protein localises to the cytoplasm. It participates in protein biosynthesis; polypeptide chain elongation. Involved in peptide bond synthesis. Stimulates efficient translation and peptide-bond synthesis on native or reconstituted 70S ribosomes in vitro. Probably functions indirectly by altering the affinity of the ribosome for aminoacyl-tRNA, thus increasing their reactivity as acceptors for peptidyl transferase. The chain is Elongation factor P from Rickettsia typhi (strain ATCC VR-144 / Wilmington).